The following is a 1146-amino-acid chain: Nucleolar protein 6 (1146 aa).

The interval 1–48 (MGPAPAGEQLRGATGEPEVMEPALEGTGKEGKKASSRKRTLAEPPAKG) is disordered. The residue at position 56 (serine 56) is a Phosphoserine. Positions 83–114 (LLRLQVEELLKEVRLSEKKKDRIDAFLREVNQ) form a coiled coil. Phosphoserine is present on residues serine 283, serine 289, and serine 811.

The protein belongs to the NRAP family. In terms of assembly, part of the small subunit (SSU) processome, composed of more than 70 proteins and the RNA chaperone small nucleolar RNA (snoRNA) U3. Interacts with RRP7A; required for NOL6 localization to nucleolus.

Its subcellular location is the nucleus. It localises to the nucleolus. It is found in the chromosome. Its function is as follows. Part of the small subunit (SSU) processome, first precursor of the small eukaryotic ribosomal subunit. During the assembly of the SSU processome in the nucleolus, many ribosome biogenesis factors, an RNA chaperone and ribosomal proteins associate with the nascent pre-rRNA and work in concert to generate RNA folding, modifications, rearrangements and cleavage as well as targeted degradation of pre-ribosomal RNA by the RNA exosome. The chain is Nucleolar protein 6 from Homo sapiens (Human).